A 136-amino-acid polypeptide reads, in one-letter code: MRTPGPLPVLLLLLAGAPAARPTPPTCYSRMRALSQEITRDFNLLQVSEPSEPCVRYLPRLYLDIHNYCVLDKLRDFVASPPCWKVAQVDSLKDKARKLYTIMNSFCRRDLVFLLDDCNALEYPIPVTTVLPDRQR.

The first 22 residues, methionine 1–proline 22, serve as a signal peptide directing secretion.

As to expression, specifically expressed in CD34+ hematopoietic cells.

It localises to the secreted. In Homo sapiens (Human), this protein is Cytokine-like protein 1 (CYTL1).